Reading from the N-terminus, the 506-residue chain is Maturase K (506 aa).

The protein belongs to the intron maturase 2 family. MatK subfamily.

Its subcellular location is the plastid. The protein resides in the chloroplast. Usually encoded in the trnK tRNA gene intron. Probably assists in splicing its own and other chloroplast group II introns. In Styphnolobium japonicum (Japanese pagoda tree), this protein is Maturase K.